The primary structure comprises 205 residues: Tic20 family protein Ycf60 (205 aa).

5 helical membrane-spanning segments follow: residues 5 to 25 (LFVNILFGTACIIIFGLVILI), 54 to 74 (AISCLIYFLPLLEGIAQFGIV), 102 to 122 (LIGFCIFITLYLIFVRGIIQI), 130 to 150 (IVQALLLYLLDSVIGTVLTSL), and 163 to 183 (LADTLLLITFMISIYAGTDAL).

It belongs to the Tic20 family.

The protein resides in the plastid. The protein localises to the chloroplast membrane. The polypeptide is Tic20 family protein Ycf60 (ycf60) (Cyanidium caldarium (Red alga)).